The primary structure comprises 257 residues: Large ribosomal subunit protein uL2 (257 aa).

Residues V207–R226 are disordered.

The protein belongs to the universal ribosomal protein uL2 family. Component of the large ribosomal subunit.

It is found in the cytoplasm. Its function is as follows. Component of the large ribosomal subunit. The ribosome is a large ribonucleoprotein complex responsible for the synthesis of proteins in the cell. In Ictalurus punctatus (Channel catfish), this protein is Large ribosomal subunit protein uL2 (rpl8).